Reading from the N-terminus, the 247-residue chain is MAPQMGYDRAITVFSPDGRLFQVEYAREAVKRGTTAVGIKAADGVVLLVDKRITSRLVEAESIEKIFQIDDHIGAATSGLVADARALVDRARVEAQVNRVSYDELIGVEVISKKICDHKQTYTQYGGVRPYGTALLIAGVDDKRPRLFETDPSGALLEYKATAIGAGRNAVVEVFEADYKEDMNIEAAILLGMDALYKAAEGKFDAGTLEVGVVSLQDKKFRKLEPEEVGNYVQQILEKHKETENKE.

The protein belongs to the peptidase T1A family. In terms of assembly, the 20S proteasome core is composed of 14 alpha and 14 beta subunits that assemble into four stacked heptameric rings, resulting in a barrel-shaped structure. The two inner rings, each composed of seven catalytic beta subunits, are sandwiched by two outer rings, each composed of seven alpha subunits. The catalytic chamber with the active sites is on the inside of the barrel. Has a gated structure, the ends of the cylinder being occluded by the N-termini of the alpha-subunits. Is capped at one or both ends by the proteasome regulatory ATPase, PAN.

The protein resides in the cytoplasm. With respect to regulation, the formation of the proteasomal ATPase PAN-20S proteasome complex, via the docking of the C-termini of PAN into the intersubunit pockets in the alpha-rings, triggers opening of the gate for substrate entry. Interconversion between the open-gate and close-gate conformations leads to a dynamic regulation of the 20S proteasome proteolysis activity. In terms of biological role, component of the proteasome core, a large protease complex with broad specificity involved in protein degradation. The protein is Proteasome subunit alpha of Methanosarcina thermophila.